The chain runs to 160 residues: Ribosome maturation factor RimP (160 aa).

Belongs to the RimP family.

It is found in the cytoplasm. Functionally, required for maturation of 30S ribosomal subunits. In Orientia tsutsugamushi (strain Ikeda) (Rickettsia tsutsugamushi), this protein is Ribosome maturation factor RimP.